The chain runs to 1205 residues: Plasma membrane calcium-transporting ATPase 4 (1205 aa).

Topologically, residues 1–100 are cytoplasmic; it reads MTNPPGQSVS…KTFLELVWEA (100 aa). The helical transmembrane segment at 101–121 threads the bilayer; that stretch reads LQDVTLIILEIAAIISLVLSF. Residues 122–147 are Extracellular-facing; that stretch reads YRPPGGDNEICGHIASSPEEEEEGET. Residues 148–168 form a helical membrane-spanning segment; the sequence is GWIEGAAILASVIIVVLVTAF. The Cytoplasmic portion of the chain corresponds to 169–369; it reads NDWSKEKQFR…LAVQIGKAGL (201 aa). Positions 294-318 are disordered; the sequence is DDDDKKKKGKKQGAPENRNKAKTQD. Phosphoserine occurs at positions 329 and 335. The helical transmembrane segment at 370 to 390 threads the bilayer; the sequence is IMSVLTVVILILYFVVDNFVI. At 391-409 the chain is on the extracellular side; it reads QRREWLPECTPVYIQYFVK. A helical transmembrane segment spans residues 410 to 430; sequence FFIIGVTVLVVAVPEGLPLAV. The Cytoplasmic segment spans residues 431 to 844; it reads TISLAYSVKK…RNVYDSISKF (414 aa). Catalysis depends on aspartate 466, which acts as the 4-aspartylphosphate intermediate. 2 residues coordinate Mg(2+): aspartate 786 and aspartate 790. A helical membrane pass occupies residues 845-865; it reads LQFQLTVNVVAVIVAFTGACI. Residues 866–872 lie on the Extracellular side of the membrane; the sequence is TQDSPLK. A helical membrane pass occupies residues 873 to 893; the sequence is AVQMLWVNLIMDTFASLALAT. Topologically, residues 894 to 919 are cytoplasmic; it reads EPPTESLLRRRPYGRNKPLISRTMMK. The chain crosses the membrane as a helical span at residues 920 to 942; sequence NILGHAVYQLLIVFLLVFAGDTL. Residues 943–956 are Extracellular-facing; sequence FDIDSGRKAPLNSP. A helical membrane pass occupies residues 957–979; the sequence is PSQHYTIVFNTFVLMQLFNEINA. The Cytoplasmic portion of the chain corresponds to 980–995; sequence RKIHGEKNVFAGVYRN. Residues 996–1016 traverse the membrane as a helical segment; it reads IIFCTVVLGTFFCQIMIVELG. Over 1017-1029 the chain is Extracellular; that stretch reads GKPFSCTSLTMEQ. The chain crosses the membrane as a helical span at residues 1030–1050; the sequence is WMWCLFIGIGELLWGQVISAI. Residues 1051 to 1205 lie on the Cytoplasmic side of the membrane; the sequence is PTKSLKFLKE…SPLPSLETPV (155 aa). Phosphoserine occurs at positions 1065 and 1071. Arginine 1072 is modified (omega-N-methylarginine). The tract at residues 1087 to 1104 is calmodulin-binding subdomain A; sequence LRRGQILWVRGLNRIQTQ. The residue at position 1103 (threonine 1103) is a Phosphothreonine; by PKC. The interval 1105 to 1114 is calmodulin-binding subdomain B; sequence IRVVKLFHNN. Position 1145 is a phosphoserine (serine 1145).

This sequence belongs to the cation transport ATPase (P-type) (TC 3.A.3) family. Type IIB subfamily. In terms of assembly, interacts with PDZD11. Interacts with SLC35G1 and STIM1. Interacts with calmodulin. Specifically expressed by sperm in testis (at protein level).

Its subcellular location is the membrane. The protein resides in the cell projection. It localises to the cilium. The protein localises to the flagellum membrane. It carries out the reaction Ca(2+)(in) + ATP + H2O = Ca(2+)(out) + ADP + phosphate + H(+). With respect to regulation, activated by calcium/calmodulin. Calcium/calmodulin-regulated and magnesium-dependent enzyme that catalyzes the hydrolysis of ATP coupled with the transport of calcium out of the cell. By regulating sperm cell calcium homeostasis, may play a role in sperm motility. In Mus musculus (Mouse), this protein is Plasma membrane calcium-transporting ATPase 4.